The primary structure comprises 132 residues: EF-hand calcium-binding domain-containing protein 10 (132 aa).

EF-hand domains are found at residues 64-99 (MDNS…LGLC) and 120-132 (EMNK…WSMF).

The sequence is that of EF-hand calcium-binding domain-containing protein 10 (Efcab10) from Mus musculus (Mouse).